Reading from the N-terminus, the 614-residue chain is Zinc finger and SCAN domain-containing protein 2 (614 aa).

2 disordered regions span residues 1–26 (MMAADIPRVTTPLSSLVQVPQEEDRQ) and 43–76 (EAVLQEDGPESEPFPQSAGKGGPQEEVTRGPQGA). The 74-residue stretch at 59–132 (SAGKGGPQEE…ALVEDLTQTL (74 aa)) folds into the SCAN box domain. 14 consecutive C2H2-type zinc fingers follow at residues 222-244 (YECPQCGKTFSRKSHLITHERTH), 250-272 (YKCDECGKSFSDGSNFSRHQTTH), 278-300 (YKCRDCGKSFSRSANLITHQRIH), 306-328 (FQCAECGKSFSRSPNLIAHQRTH), 334-356 (YSCPECGKSFGNRSSLNTHQGIH), 362-384 (YECKECGESFSYNSNLIRHQRIH), 390-412 (YKCTDCGQRFSQSSALITHRRTH), 418-440 (YQCSECGKSFSRSSNLATHRRTH), 446-468 (YKCGVCGKSFSQSSSLIAHQGMH), 474-496 (YECLTCGESFSWSSNLLKHQRIH), 502-524 (YKCSECGKCFSQRSQLVVHQRTH), 530-552 (YKCLMCGKSFSRGSILVMHQRAH), 558-580 (YRCPECGKGFSWNSVLIIHQRIH), and 586-608 (YKCPECGKGFSNSSNFITHQRTH).

It belongs to the krueppel C2H2-type zinc-finger protein family.

The protein localises to the nucleus. Its function is as follows. May be involved in transcriptional regulation during the post-meiotic stages of spermatogenesis. This is Zinc finger and SCAN domain-containing protein 2 (ZSCAN2) from Homo sapiens (Human).